Here is a 250-residue protein sequence, read N- to C-terminus: Acidic endochitinase (250 aa).

Glutamine 1 is subject to Pyrrolidone carboxylic acid. The Chitin-binding type-1 domain occupies 1-36 (QNCQCDTTIYCCSQHGYCGNSYDYCGPGCQAGPCWD). 7 disulfides stabilise this stretch: cysteine 3–cysteine 12, cysteine 5–cysteine 18, cysteine 11–cysteine 25, cysteine 29–cysteine 34, cysteine 66–cysteine 115, cysteine 128–cysteine 136, and cysteine 218–cysteine 250. The active-site Proton donor is glutamate 110.

Belongs to the glycosyl hydrolase 19 family. Chitinase class I subfamily.

The catalysed reaction is Random endo-hydrolysis of N-acetyl-beta-D-glucosaminide (1-&gt;4)-beta-linkages in chitin and chitodextrins.. Its function is as follows. Defense against chitin-containing fungal pathogens. The polypeptide is Acidic endochitinase (Dioscorea japonica (Japanese yam)).